A 515-amino-acid polypeptide reads, in one-letter code: Histidine ammonia-lyase (515 aa).

Positions 148–150 form a cross-link, 5-imidazolinone (Ala-Gly); sequence ASG. At serine 149 the chain carries 2,3-didehydroalanine (Ser).

It belongs to the PAL/histidase family. Contains an active site 4-methylidene-imidazol-5-one (MIO), which is formed autocatalytically by cyclization and dehydration of residues Ala-Ser-Gly.

The protein resides in the cytoplasm. The enzyme catalyses L-histidine = trans-urocanate + NH4(+). Its pathway is amino-acid degradation; L-histidine degradation into L-glutamate; N-formimidoyl-L-glutamate from L-histidine: step 1/3. This chain is Histidine ammonia-lyase, found in Pseudomonas syringae pv. tomato (strain ATCC BAA-871 / DC3000).